A 345-amino-acid chain; its full sequence is Platelet-derived growth factor C (345 aa).

The N-terminal stretch at 1 to 22 (MLLFGFLLLTFALVSQRQGAEA) is a signal peptide. N25 and N55 each carry an N-linked (GlcNAc...) asparagine glycan. Residues 46–163 (HEKIITVSAN…PGFCIHYTLL (118 aa)) form the CUB domain. Cystine bridges form between C104/C124, C250/C294, C280/C335, and C287/C337.

This sequence belongs to the PDGF/VEGF growth factor family. Homodimer; disulfide-linked. Interacts with PDGFRA homodimers, and with heterodimers formed by PDGFRA and PDGFRB. Proteolytic removal of the N-terminal CUB domain releasing the core domain is necessary for unmasking the receptor-binding epitopes of the core domain. Cleavage after basic residues in the hinge region (region connecting the CUB and growth factor domains) gives rise to the receptor-binding form.

The protein localises to the secreted. Functionally, growth factor that plays an essential role in the regulation of embryonic development, cell proliferation, cell migration, survival and chemotaxis. Potent mitogen and chemoattractant for cells of mesenchymal origin. Required for normal skeleton formation during embryonic development. Required for normal skin morphogenesis during embryonic development. Plays an important role in wound healing, in angiogenesis and blood vessel development. This is Platelet-derived growth factor C (PDGFC) from Gekko japonicus (Schlegel's Japanese gecko).